The sequence spans 339 residues: Histidine protein methyltransferase 1 (339 aa).

Phosphoserine is present on residues serine 333 and serine 338.

Belongs to the methyltransferase superfamily. METTL18 family.

It is found in the cytoplasm. The protein localises to the nucleus. It catalyses the reaction L-histidyl-[protein] + S-adenosyl-L-methionine = N(tele)-methyl-L-histidyl-[protein] + S-adenosyl-L-homocysteine + H(+). Functionally, protein-histidine N-methyltransferase that mediates methylation of target protein on His residues. This Schizosaccharomyces pombe (strain 972 / ATCC 24843) (Fission yeast) protein is Histidine protein methyltransferase 1.